Here is a 136-residue protein sequence, read N- to C-terminus: MSLQISILTPEKPFWNGQAEEIILPTETGEMGVLKNHAPIITGLDVGAMLVRTKEEWNSYALMGGFAVVKKNKVTILANEAESAETIDAEEAKNAFEIAKGNLEKAEGVKQKVEANFAYKRAKARFQVVKVVNKYS.

Belongs to the ATPase epsilon chain family. As to quaternary structure, F-type ATPases have 2 components, CF(1) - the catalytic core - and CF(0) - the membrane proton channel. CF(1) has five subunits: alpha(3), beta(3), gamma(1), delta(1), epsilon(1). CF(0) has three main subunits: a, b and c.

It localises to the plastid. It is found in the chloroplast thylakoid membrane. Produces ATP from ADP in the presence of a proton gradient across the membrane. The polypeptide is ATP synthase epsilon chain, chloroplastic (Tetradesmus obliquus (Green alga)).